We begin with the raw amino-acid sequence, 103 residues long: Cell division suppressor protein YneA (103 aa).

A LysM domain is found at 36-87; sequence VKIKVQDGDTLWSLADHVAEKKHINKEDFIEWVTENNHLQTADIKPGDELIL.

It belongs to the YneA family.

The protein resides in the cytoplasm. Inhibits cell division during the SOS response. Affects a later stage of the cell division protein assembly, after the assembly of the Z ring, by probably suppressing recruitment of FtsL and/or DivIC to the division machinery. This chain is Cell division suppressor protein YneA, found in Bacillus velezensis (strain DSM 23117 / BGSC 10A6 / LMG 26770 / FZB42) (Bacillus amyloliquefaciens subsp. plantarum).